Consider the following 40-residue polypeptide: Protein YneP (40 aa).

This Escherichia coli (strain K12) protein is Protein YneP.